Here is a 323-residue protein sequence, read N- to C-terminus: HPr kinase/phosphorylase (323 aa).

Catalysis depends on residues H142 and K163. 157–164 (GESGVGKS) is a binding site for ATP. S164 lines the Mg(2+) pocket. The Proton acceptor; for phosphorylation activity. Proton donor; for dephosphorylation activity role is filled by D181. Residues 205–214 (LEVRGLGMLN) form an important for the catalytic mechanism of both phosphorylation and dephosphorylation region. E206 is a Mg(2+) binding site. R249 is a catalytic residue. Positions 270-275 (PVAAGR) are important for the catalytic mechanism of dephosphorylation.

The protein belongs to the HPrK/P family. As to quaternary structure, homohexamer. Requires Mg(2+) as cofactor.

It carries out the reaction [HPr protein]-L-serine + ATP = [HPr protein]-O-phospho-L-serine + ADP + H(+). The enzyme catalyses [HPr protein]-O-phospho-L-serine + phosphate + H(+) = [HPr protein]-L-serine + diphosphate. Catalyzes the ATP- as well as the pyrophosphate-dependent phosphorylation of a specific serine residue in HPr, a phosphocarrier protein of the phosphoenolpyruvate-dependent sugar phosphotransferase system (PTS). HprK/P also catalyzes the pyrophosphate-producing, inorganic phosphate-dependent dephosphorylation (phosphorolysis) of seryl-phosphorylated HPr (P-Ser-HPr). This is HPr kinase/phosphorylase from Nitrosomonas europaea (strain ATCC 19718 / CIP 103999 / KCTC 2705 / NBRC 14298).